The sequence spans 285 residues: Acrosomal protein SP-10 (285 aa).

The N-terminal stretch at M1 to G21 is a signal peptide. The interval T64–S200 is disordered. 19 consecutive repeat copies span residues S66 to S70, S71 to S75, P85 to A89, S91 to S95, V110 to P114, S115 to P119, S120 to L124, S125 to S129, L130 to A134, S135 to P139, S145 to A149, S150 to P154, S155 to A159, S160 to P164, S165 to P169, S170 to A174, S175 to S179, L180 to A184, and S190 to P194. The tract at residues S66 to S95 is 3 X 5 AA repeats of S-E-H-[GA]-A. Residues G69–S95 show a composition bias toward basic and acidic residues. A 7 X 5 AA repeats of S-G-E-H-[AL] region spans residues P85–A184. The tract at residues V110–P194 is 9 X 5 AA repeats of [SV]-G-E-Q-[PSA]. N278 carries N-linked (GlcNAc...) asparagine glycosylation.

In terms of tissue distribution, testis.

The protein localises to the cytoplasmic vesicle. Its subcellular location is the secretory vesicle. It is found in the acrosome. In Papio hamadryas (Hamadryas baboon), this protein is Acrosomal protein SP-10 (ACRV1).